The chain runs to 101 residues: Large ribosomal subunit protein bL21 (101 aa).

It belongs to the bacterial ribosomal protein bL21 family. In terms of assembly, part of the 50S ribosomal subunit. Contacts protein L20.

Functionally, this protein binds to 23S rRNA in the presence of protein L20. This Beutenbergia cavernae (strain ATCC BAA-8 / DSM 12333 / CCUG 43141 / JCM 11478 / NBRC 16432 / NCIMB 13614 / HKI 0122) protein is Large ribosomal subunit protein bL21.